The primary structure comprises 1140 residues: Probable DNA-directed RNA polymerase II subunit RPB2 homolog (1140 aa).

A Mg(2+)-binding site is contributed by aspartate 773. Residues cysteine 1092, cysteine 1095, cysteine 1105, and cysteine 1108 each coordinate Zn(2+). The C4-type zinc finger occupies 1092 to 1108 (CKDCGMMSSTSKKCHHC).

The protein belongs to the RNA polymerase beta chain family.

It catalyses the reaction RNA(n) + a ribonucleoside 5'-triphosphate = RNA(n+1) + diphosphate. In terms of biological role, component of the DNA-dependent RNA polymerase that catalyzes the transcription of DNA into RNA using the four ribonucleoside triphosphates as substrates. Second largest component of RNA polymerase II which synthesizes mRNA precursors and many functional non-coding RNAs. Proposed to contribute to the polymerase catalytic activity and forms the polymerase active center together with the largest subunit. This chain is Probable DNA-directed RNA polymerase II subunit RPB2 homolog, found in Invertebrate iridescent virus 3 (IIV-3).